Reading from the N-terminus, the 103-residue chain is uncharacterized protein (103 aa).

This is an uncharacterized protein from Shigella flexneri.